The chain runs to 496 residues: Polyamine oxidase 6 (496 aa).

The first 27 residues, 1–27 (MTKPTTMAIFLVLALSIAQLLPSLVAG), serve as a signal peptide directing secretion. FAD contacts are provided by Glu61 and Arg69. N-linked (GlcNAc...) asparagine glycans are attached at residues Asn103 and Asn150. Val261 is a binding site for FAD. Asn278 carries N-linked (GlcNAc...) asparagine glycosylation. Glu454 contacts FAD.

Belongs to the flavin monoamine oxidase family. FAD is required as a cofactor.

It localises to the secreted. It is found in the extracellular space. Its subcellular location is the apoplast. The protein operates within amine and polyamine degradation; spermine degradation. In terms of biological role, flavoenzyme involved in polyamine back-conversion. Catalyzes the oxidation of the secondary amino group of polyamines, such as spermine and spermidine. The sequence is that of Polyamine oxidase 6 from Oryza sativa subsp. japonica (Rice).